We begin with the raw amino-acid sequence, 201 residues long: Holliday junction resolvase RecU (201 aa).

Mg(2+) contacts are provided by Thr85, Asp87, Glu100, and Gln119.

It belongs to the RecU family. The cofactor is Mg(2+).

It is found in the cytoplasm. The enzyme catalyses Endonucleolytic cleavage at a junction such as a reciprocal single-stranded crossover between two homologous DNA duplexes (Holliday junction).. Functionally, endonuclease that resolves Holliday junction intermediates in genetic recombination. Cleaves mobile four-strand junctions by introducing symmetrical nicks in paired strands. Promotes annealing of linear ssDNA with homologous dsDNA. Required for DNA repair, homologous recombination and chromosome segregation. This is Holliday junction resolvase RecU from Geobacillus thermodenitrificans (strain NG80-2).